The chain runs to 111 residues: uncharacterized protein (111 aa).

Residues 1–26 (MDLKDGVEEEEGAGENGKGGTHAQRV) are disordered.

This is an uncharacterized protein from Caenorhabditis elegans.